We begin with the raw amino-acid sequence, 201 residues long: MNETNDNDIDQLIYLFSKLPGLGIRSARRIALYLLQDKDVRLKSLINNLVEIDKKIVKCEICGNMDTENICRICSSEYRDKSIIAIVETVAELWAMERSGNFKGLYHVFGHNLSAASRQNPSILRLPELLTRCFAENIKEVIIATNSTLEGQTTAYFITEYLKEHPAKISRLASGIPIGGELDYLDDGTVSAAINLRQPFE.

The C4-type zinc finger occupies 59–74; it reads CEICGNMDTENICRIC. A Toprim domain is found at 82–177; the sequence is SIIAIVETVA…KISRLASGIP (96 aa).

It belongs to the RecR family.

Functionally, may play a role in DNA repair. It seems to be involved in an RecBC-independent recombinational process of DNA repair. It may act with RecF and RecO. This Rickettsia peacockii (strain Rustic) protein is Recombination protein RecR.